The following is a 135-amino-acid chain: CDGSH iron-sulfur domain-containing protein 2B (135 aa).

The Lumenal segment spans residues 1 to 37 (MVLETISKIIKTQLPAYLKKFPLPETIGGFARLTVLD). Residues 38-60 (WLRLLPLLGILTLLGYLTIRPFL) traverse the membrane as a helical segment. The Cytoplasmic portion of the chain corresponds to 61–135 (PKKKKQKDSL…GPLILKKKII (75 aa)). [2Fe-2S] cluster is bound by residues cysteine 99, cysteine 101, cysteine 110, and histidine 114.

The protein belongs to the CISD protein family. CISD2 subfamily. As to quaternary structure, homodimer. The cofactor is [2Fe-2S] cluster.

The protein resides in the endoplasmic reticulum membrane. Its subcellular location is the mitochondrion outer membrane. Regulator of autophagy that contributes to antagonize becn1-mediated cellular autophagy at the endoplasmic reticulum. Participates in the interaction of bcl2 with becn1 and is required for bcl2-mediated depression of endoplasmic reticulum Ca(2+) stores during autophagy. This is CDGSH iron-sulfur domain-containing protein 2B (cisd2b) from Oncorhynchus mykiss (Rainbow trout).